Reading from the N-terminus, the 416-residue chain is Actin-like protein 9 (416 aa).

Positions 1–23 (MDPNQGNPLEPQDSPEIPKPSLN) are disordered.

The protein belongs to the actin family. In terms of assembly, interacts with ACTL7A.

The protein resides in the cytoplasmic vesicle. Its subcellular location is the secretory vesicle. It is found in the acrosome. It localises to the cytoplasm. The protein localises to the cytoskeleton. The protein resides in the perinuclear theca. Testis-specic protein that plays an important role in fusion of proacrosomal vesicles and perinuclear theca formation. This Bos taurus (Bovine) protein is Actin-like protein 9 (ACTL9).